A 457-amino-acid chain; its full sequence is Solute carrier family 38 member 6 (457 aa).

Met-1 carries the N-acetylmethionine modification. Phosphoserine is present on residues Ser-4 and Ser-7. Helical transmembrane passes span 48-68 (FGLSVFNVMNAIMGSGILGLA), 70-90 (VMANTGILGFSFLLLFVALLA), 112-132 (LGLFAFGLPGKVVVAGTIIIQ), 171-191 (LLIIICVGIVFPLSLLPKIGF), and 192-212 (LGYTSSLSFFFMVFFALVVVI). Cys-219 and Cys-239 are joined by a disulfide. 6 helical membrane passes run 251–271 (VYAIPTMAFSFLCHTSVLPIY), 289–309 (AIALSFLVYFVSALFGYLTFY), 328–348 (VIVMAVKLCILFAVLLTAPLI), 372–392 (SLTTAALNAIIVVLAIYVPDI), 395–415 (VFGVVGASTSTCLIFVFPGLF), and 432–452 (ALFLLLTGAVVGSFSLVLIIF).

This sequence belongs to the amino acid/polyamine transporter 2 family. In terms of tissue distribution, expressed exclusively in neurons and not in astrocytes and glia cells. Highly expressed in the synapse. Highly expressed in glutamatergic neurons. Primarily expressed in excitatory neurons, with some minor expression in inhibitory neurons.

The protein localises to the cell membrane. It is found in the synapse. The enzyme catalyses L-glutamine(out) = L-glutamine(in). It catalyses the reaction L-glutamate(out) = L-glutamate(in). Its function is as follows. Amino acid transporter with an apparent selectivity for L-glutamine and L-glutamate. May facilitate glutamine uptake in excitatory neurons. The transport mechanism remains to be elucidated. This Mus musculus (Mouse) protein is Solute carrier family 38 member 6.